We begin with the raw amino-acid sequence, 145 residues long: Globin (145 aa).

Residue Ser-2 is modified to N-acetylserine. The 144-residue stretch at 2 to 145 (SLSAAEADLV…IVAALKAAGK (144 aa)) folds into the Globin domain. His-96 provides a ligand contact to heme b.

Belongs to the globin family. In terms of assembly, monomer.

The sequence is that of Globin from Aplysia kurodai (Kuroda's sea hare).